The sequence spans 368 residues: uncharacterized protein (368 aa).

Belongs to the CdaR family.

This is an uncharacterized protein from Bacillus subtilis (strain 168).